The sequence spans 114 residues: uncharacterized protein (114 aa).

The 87-residue stretch at 13–99 (YYAVIFSSVK…VWYESYAVRV (87 aa)) folds into the ABM domain.

This is an uncharacterized protein from Bacillus subtilis (strain 168).